The sequence spans 282 residues: MREITPRKIIEMKGKEKIAMITAYDYPSALLADKAGFDIVFVGDSLGMVVYGEPNTLNVSMEQMVFHTRAVARAVKRALVLADMPFGSYEVSVEEGIKNAIKLIQAGADAVKIEGGYDHKKLVKRLVRMGIPVMGHTGLTPQRYLRLGGYRIMGSTEEEVEEIIRDAKALEKAGAFAVVLEFVLADVAKLVTEEVSIPTIGIGSGPYVDGQVLVWHDVLGLYEESPPFVKRYANLRDEILGAISEFKKDVKEGKFPGREHYWEFQDKEEFKRIKESVLRKVD.

The Mg(2+) site is built by Asp44 and Asp83. Residues 44–45 (DS), Asp83, and Lys112 contribute to the 3-methyl-2-oxobutanoate site. Mg(2+) is bound at residue Glu114. The Proton acceptor role is filled by Glu181.

This sequence belongs to the PanB family. In terms of assembly, homodecamer; pentamer of dimers. Mg(2+) is required as a cofactor.

The protein resides in the cytoplasm. It catalyses the reaction 3-methyl-2-oxobutanoate + (6R)-5,10-methylene-5,6,7,8-tetrahydrofolate + H2O = 2-dehydropantoate + (6S)-5,6,7,8-tetrahydrofolate. It functions in the pathway cofactor biosynthesis; coenzyme A biosynthesis. Functionally, catalyzes the reversible reaction in which hydroxymethyl group from 5,10-methylenetetrahydrofolate is transferred onto alpha-ketoisovalerate to form ketopantoate. This is 3-methyl-2-oxobutanoate hydroxymethyltransferase from Pyrococcus abyssi (strain GE5 / Orsay).